The primary structure comprises 387 residues: Cysteine desulfurase IscS (387 aa).

Pyridoxal 5'-phosphate-binding positions include 73 to 74, Asn-155, Gln-183, and 203 to 205; these read AT and SAH. An N6-(pyridoxal phosphate)lysine modification is found at Lys-206. Thr-241 is a binding site for pyridoxal 5'-phosphate. Catalysis depends on Cys-328, which acts as the Cysteine persulfide intermediate. Cys-328 serves as a coordination point for [2Fe-2S] cluster.

The protein belongs to the class-V pyridoxal-phosphate-dependent aminotransferase family. NifS/IscS subfamily. Homodimer. Forms a heterotetramer with IscU, interacts with other sulfur acceptors. Pyridoxal 5'-phosphate is required as a cofactor.

It localises to the cytoplasm. The enzyme catalyses (sulfur carrier)-H + L-cysteine = (sulfur carrier)-SH + L-alanine. It participates in cofactor biosynthesis; iron-sulfur cluster biosynthesis. Master enzyme that delivers sulfur to a number of partners involved in Fe-S cluster assembly, tRNA modification or cofactor biosynthesis. Catalyzes the removal of elemental sulfur atoms from cysteine to produce alanine. Functions as a sulfur delivery protein for Fe-S cluster synthesis onto IscU, an Fe-S scaffold assembly protein, as well as other S acceptor proteins. The chain is Cysteine desulfurase IscS from Helicobacter pylori (strain J99 / ATCC 700824) (Campylobacter pylori J99).